A 309-amino-acid chain; its full sequence is MIDCIYNSDSIFEIKKLDSNSIHAIISDIPYGIDYDDWDILHSNTNSALGGTSSAQHKTSLFKRRGKPLNGWSEADKKRPQEYQEWVESWSNEWFRVLKSGSSVFVFAGRQFAHRVVVAFENSGFTFKDMLSWEKDKAPHRAQRISCVFERRGDIANTNKWVGWRVANLRPLFEPILWFQKPYKTGSTLADNLIKHEVGAWNENSLTHWNIQQGALNHSNILKVRITSEDKGYHVAQKPLNLMKLLIDLVTKEEQIVLDPFAGSGTTLLAAKELNRHFIGYEKNNGIYNIAVNRLGIEKNNCFYNKEKK.

It belongs to the N(4)/N(6)-methyltransferase family.

The catalysed reaction is a 2'-deoxyadenosine in DNA + S-adenosyl-L-methionine = an N(6)-methyl-2'-deoxyadenosine in DNA + S-adenosyl-L-homocysteine + H(+). Functionally, a beta subtype methylase that recognizes the double-stranded sequence 5'-AAGCTT-3', methylates A-1 on both strands, and protects the DNA from cleavage by the HindIII endonuclease. This is Type II methyltransferase M.HindIII from Haemophilus influenzae (strain ATCC 51907 / DSM 11121 / KW20 / Rd).